A 333-amino-acid polypeptide reads, in one-letter code: Pollen allergen KBG 41 (333 aa).

The signal sequence occupies residues 1-23 (MAVHQYTVALFLAVALVAGPAAS). A run of 2 repeats spans residues 309–320 (TGAATAAAGGYK) and 321–332 (TGAATPTAGGYK). The segment at 309 to 332 (TGAATAAAGGYKTGAATPTAGGYK) is 2 X 12 AA tandem repeats.

Belongs to the Poa p IX/Phl p VI allergen family. In terms of tissue distribution, pollen.

The polypeptide is Pollen allergen KBG 41 (Poa pratensis (Kentucky bluegrass)).